We begin with the raw amino-acid sequence, 275 residues long: Multivesicular body subunit 12A (275 aa).

Positions 5–145 (STPITGLAWI…GLVFWCRKGS (141 aa)) constitute an MABP domain. The short motif at 151-156 (PTPKPR) is the SH3-binding element. The UMA domain maps to 216-267 (IDGIPFTIHPMFENTINNSSVAASDFRDLHIKTLSEIESEYNYGFVVEKTAA).

It belongs to the MVB12 family. As to quaternary structure, component of the ESCRT-I complex (endosomal sorting complex required for transport I).

Its subcellular location is the cytoplasm. The protein localises to the endosome. It localises to the late endosome membrane. In terms of biological role, component of the ESCRT-I complex, a regulator of vesicular trafficking process. Required for the sorting of endocytic ubiquitinated cargos into multivesicular bodies. This Xenopus laevis (African clawed frog) protein is Multivesicular body subunit 12A (mvb12a).